The primary structure comprises 229 residues: Ras-related protein Rab-33B (229 aa).

The GTP site is built by N43, V44, G45, K46, T47, C48, T62, and T65. T47 is a Mg(2+) binding site. Positions 56–68 match the Switch 1 motif; it reads GRFPDRTEATIGV. Positions 65 and 88 each coordinate Mg(2+). The Switch 2 motif lies at 89–108; that stretch reads TAGQERFRKSMVQHYYRNVH. Residues G91, N148, K149, D151, A179, and K180 each contribute to the GTP site. S-geranylgeranyl cysteine attachment occurs at residues C227 and C229. The residue at position 229 (C229) is a Cysteine methyl ester.

This sequence belongs to the small GTPase superfamily. Rab family. As to quaternary structure, interacts (GTP- and GDP-bound forms) with ATG16L1; the complex consists of a tetramer where two RAB33B molecules bind independently one molecule of the ATG16L1 homodimer; the interaction promotes ATG12-ATG5-ATG16L1 complex recruitment to phagophores. Interacts with ATG16L2; however interaction is approximately hundred times lower than for ATG16L1. Interacts with RIC1 (via C-terminus domain); the interaction is direct with a preference for RAB33B-GTP. Interacts with RGP1. It depends on Mg(2+) as a cofactor. Post-translationally, prenylated.

Its subcellular location is the golgi apparatus membrane. The protein localises to the golgi apparatus. The protein resides in the cis-Golgi network. It localises to the preautophagosomal structure membrane. The enzyme catalyses GTP + H2O = GDP + phosphate + H(+). Its activity is regulated as follows. Regulated by guanine nucleotide exchange factors (GEFs) which promote the exchange of bound GDP for free GTP. Regulated by GTPase activating proteins (GAPs) such as SGSM2 which increase the GTP hydrolysis activity. Inhibited by GDP dissociation inhibitors (GDIs). Functionally, the small GTPases Rab are key regulators of intracellular membrane trafficking, from the formation of transport vesicles to their fusion with membranes. Rabs cycle between an inactive GDP-bound form and an active GTP-bound form that is able to recruit to membranes different sets of downstream effectors directly responsible for vesicle formation, movement, tethering and fusion. RAB33B acts, in coordination with RAB6A, to regulate intra-Golgi retrograde trafficking. Participates in autophagosome formation by recruiting the ATG12-ATG5-ATG16L1 complex to phagophores, probably in a nucleotide-independent manner. This is Ras-related protein Rab-33B (RAB33B) from Pongo abelii (Sumatran orangutan).